A 255-amino-acid polypeptide reads, in one-letter code: Phosphoribosylformylglycinamidine synthase subunit PurQ (255 aa).

In terms of domain architecture, Glutamine amidotransferase type-1 spans T6 to V255. Residue C96 is the Nucleophile of the active site. Catalysis depends on residues H217 and E219.

Part of the FGAM synthase complex composed of 1 PurL, 1 PurQ and 2 PurS subunits.

It is found in the cytoplasm. It catalyses the reaction N(2)-formyl-N(1)-(5-phospho-beta-D-ribosyl)glycinamide + L-glutamine + ATP + H2O = 2-formamido-N(1)-(5-O-phospho-beta-D-ribosyl)acetamidine + L-glutamate + ADP + phosphate + H(+). The catalysed reaction is L-glutamine + H2O = L-glutamate + NH4(+). It participates in purine metabolism; IMP biosynthesis via de novo pathway; 5-amino-1-(5-phospho-D-ribosyl)imidazole from N(2)-formyl-N(1)-(5-phospho-D-ribosyl)glycinamide: step 1/2. Functionally, part of the phosphoribosylformylglycinamidine synthase complex involved in the purines biosynthetic pathway. Catalyzes the ATP-dependent conversion of formylglycinamide ribonucleotide (FGAR) and glutamine to yield formylglycinamidine ribonucleotide (FGAM) and glutamate. The FGAM synthase complex is composed of three subunits. PurQ produces an ammonia molecule by converting glutamine to glutamate. PurL transfers the ammonia molecule to FGAR to form FGAM in an ATP-dependent manner. PurS interacts with PurQ and PurL and is thought to assist in the transfer of the ammonia molecule from PurQ to PurL. This Dehalococcoides mccartyi (strain ATCC BAA-2266 / KCTC 15142 / 195) (Dehalococcoides ethenogenes (strain 195)) protein is Phosphoribosylformylglycinamidine synthase subunit PurQ.